Reading from the N-terminus, the 213-residue chain is Thymidine kinase (213 aa).

ATP contacts are provided by residues 22–29 (GSMFSGKT) and 94–97 (DEAQ). Residue glutamate 95 is the Proton acceptor of the active site. Residues cysteine 151, cysteine 154, cysteine 183, and cysteine 186 each coordinate Zn(2+). Residues 185–213 (RCFQPPRPTSTSSLKAPAPAATAPRPELP) are disordered. The segment covering 193–213 (TSTSSLKAPAPAATAPRPELP) has biased composition (low complexity).

This sequence belongs to the thymidine kinase family. In terms of assembly, homotetramer.

Its subcellular location is the cytoplasm. The enzyme catalyses thymidine + ATP = dTMP + ADP + H(+). This Rhodothermus sp. (strain ITI 518) protein is Thymidine kinase.